A 1663-amino-acid polypeptide reads, in one-letter code: Cortactin-binding protein 2 (1663 aa).

5 disordered regions span residues M1–A23, K203–E222, G367–G440, G454–S478, and R498–S616. The stretch at K119–K276 forms a coiled coil. Over residues P386 to S396 the composition is skewed to low complexity. R498 is subject to Asymmetric dimethylarginine. The segment covering T583–Q593 has biased composition (polar residues). ANK repeat units lie at residues G709–Y739, D743–A772, N776–H805, G809–V838, D842–G871, and E912–R942. The interval K1449 to E1482 is disordered. S1524 bears the Phosphoserine mark. Positions Q1581–K1663 are disordered. Residues K1582–K1599 are compositionally biased toward polar residues. A compositionally biased stretch (low complexity) spans S1624–Q1638. The span at I1639–V1648 shows a compositional bias: polar residues. Residues H1653–K1663 are compositionally biased toward basic and acidic residues.

In terms of assembly, interacts with CTTN/cortactin SH3 domain. Interacts with STRN, STRN4/zinedin and MOB4/phocein; this interactions mediate the association with the STRIPAK core complex and may regulate dendritic spine distribution of the STRIPAK complex in hippocampal neurons. Activation of glutamate receptors weakens the interaction with STRN and STRN4. As to expression, highest expression in brain. Also expressed in kidney, pancreas, lung, heart, liver, skeletal muscle and placenta.

The protein resides in the cytoplasm. Its subcellular location is the cell cortex. It localises to the cell projection. It is found in the dendritic spine. Regulates the dendritic spine distribution of CTTN/cortactin in hippocampal neurons, and thus controls dendritic spinogenesis and dendritic spine maintenance. Associates with the striatin-interacting phosphatase and kinase (STRIPAK) core complex to regulate dendritic spine distribution of the STRIPAK complex in hippocampal neurons. This chain is Cortactin-binding protein 2, found in Homo sapiens (Human).